Here is a 637-residue protein sequence, read N- to C-terminus: Protein RRP6-like 1 (637 aa).

Residues V118–L283 enclose the 3'-5' exonuclease domain. In terms of domain architecture, HRDC spans N334–F414. Over residues V553–Y565 the composition is skewed to acidic residues. The disordered stretch occupies residues V553–H624. Polar residues predominate over residues E580–T598. A compositionally biased stretch (acidic residues) spans V602–D614.

The protein resides in the nucleus. It is found in the nucleoplasm. Functionally, acts as an important epigenetic regulator through multiple silencing mechanisms. Involved in transcriptional gene silencing (TGS). Plays a role for DNA methylation in the RNA-directed DNA methylation (RdDM) pathway. Contributes to the methylation status of the retrotransposon SN1. Required for DNA methylation only at a subset of RdDM target loci. Plays a regulatory role in RdDM through retention of non-coding RNAs (ncRNAs) in normal cells. Helps to retain Pol V-transcribed RNAs in chromatin to enable their scaffold function and is required for genome-wide Pol IV-dependent siRNA (24 nt siRNA) production that may involve retention of Pol IV transcripts. Involved in association with RRP6L2 in the silencing of the solo LTR locus. Controls levels of ncRNAs from the solo LTR locus. Seems to function independently of the RdDM pathway. Functions redundantly with RRP6L2 in the regulation of FLC locus. Participates in the maintenance of trimethylated 'Lys-27' (H3K27me3) at FLC locus via the regulation of antisense long non-coding RNAs (lncRNAs) and the regulation of diverse antisense RNAs derived from the FLC locus. Seems not involved in the exosomal RNA degradation. Can complement the growth defect of a yeast mutant lacking RRP6 exonuclease. This is Protein RRP6-like 1 from Arabidopsis thaliana (Mouse-ear cress).